The following is a 241-amino-acid chain: Adenosylcobinamide-GDP ribazoletransferase (241 aa).

5 helical membrane passes run 24 to 44, 48 to 68, 103 to 123, 175 to 195, and 218 to 238; these read IVFF…SIFY, FINQ…IYGF, VVTF…FNSI, VIIL…FSLI, and IIGF…LISF.

The protein belongs to the CobS family. Mg(2+) is required as a cofactor.

It is found in the cell membrane. The enzyme catalyses alpha-ribazole + adenosylcob(III)inamide-GDP = adenosylcob(III)alamin + GMP + H(+). The catalysed reaction is alpha-ribazole 5'-phosphate + adenosylcob(III)inamide-GDP = adenosylcob(III)alamin 5'-phosphate + GMP + H(+). Its pathway is cofactor biosynthesis; adenosylcobalamin biosynthesis; adenosylcobalamin from cob(II)yrinate a,c-diamide: step 7/7. In terms of biological role, joins adenosylcobinamide-GDP and alpha-ribazole to generate adenosylcobalamin (Ado-cobalamin). Also synthesizes adenosylcobalamin 5'-phosphate from adenosylcobinamide-GDP and alpha-ribazole 5'-phosphate. This is Adenosylcobinamide-GDP ribazoletransferase from Picrophilus torridus (strain ATCC 700027 / DSM 9790 / JCM 10055 / NBRC 100828 / KAW 2/3).